The following is a 679-amino-acid chain: Methionine--tRNA ligase (679 aa).

Positions 14-24 match the 'HIGH' region motif; sequence PYANGSIHLGH. 4 residues coordinate Zn(2+): C145, C148, C158, and C161. The 'KMSKS' region signature appears at 331 to 335; sequence KMSKS. Position 334 (K334) interacts with ATP. The region spanning 577–679 is the tRNA-binding domain; that stretch reads TFAAVDLRVA…SGAKPGQRIK (103 aa).

The protein belongs to the class-I aminoacyl-tRNA synthetase family. MetG type 1 subfamily. Homodimer. It depends on Zn(2+) as a cofactor.

It localises to the cytoplasm. It carries out the reaction tRNA(Met) + L-methionine + ATP = L-methionyl-tRNA(Met) + AMP + diphosphate. In terms of biological role, is required not only for elongation of protein synthesis but also for the initiation of all mRNA translation through initiator tRNA(fMet) aminoacylation. This chain is Methionine--tRNA ligase, found in Pseudomonas putida (strain ATCC 47054 / DSM 6125 / CFBP 8728 / NCIMB 11950 / KT2440).